Reading from the N-terminus, the 349-residue chain is Phosphate carrier protein, mitochondrial (349 aa).

Solcar repeat units follow at residues 47–131 (KYFA…FKVQ), 144–229 (YRTF…TVEL), and 246–324 (EQLV…VKVW). The next 6 membrane-spanning stretches (helical) occupy residues 48-68 (YFAL…TAVV), 108-128 (APTF…YEVF), 147-167 (FVYL…LSPL), 207-227 (PLWG…EKTV), 248-268 (LVVT…VSHP), and 304-324 (IIMI…VKVW).

Belongs to the mitochondrial carrier (TC 2.A.29) family.

It is found in the mitochondrion inner membrane. Functionally, transport of phosphate groups from the cytosol to the mitochondrial matrix. The sequence is that of Phosphate carrier protein, mitochondrial from Choristoneura fumiferana (Spruce budworm moth).